Reading from the N-terminus, the 148-residue chain is Probable transporter PD_1893 (148 aa).

The next 4 membrane-spanning stretches (helical) occupy residues 11–31 (FTVA…SEMI), 48–68 (NPSL…GMAL), 93–113 (IVFG…CPGP), and 118–138 (LSTG…GMII).

Belongs to the TsuA/YedE (TC 9.B.102) family.

It localises to the cell inner membrane. This is Probable transporter PD_1893 from Xylella fastidiosa (strain Temecula1 / ATCC 700964).